The chain runs to 1044 residues: Unconventional myosin-Ic (1044 aa).

Residues 28–712 (GVQDFVLLEN…TLFATEDSLE (685 aa)) enclose the Myosin motor domain. Residues Asn-69, Tyr-77, 120–129 (SGESGAGKTE), and 173–177 (NDNSS) each bind ATP. Lys-364 is subject to N6-methyllysine. Ser-389 bears the Phosphoserine mark. The residue at position 467 (Lys-467) is an N6-acetyllysine. Ser-517 carries the post-translational modification Phosphoserine. Residues 589-611 (LLQLVEILRSKEPAYIRCIKPND) form an actin-binding region. 2 IQ domains span residues 715 to 744 (RQSL…SAIC) and 738 to 767 (VKRS…AAQT). Residues Ser-845 and Ser-1022 each carry the phosphoserine modification. The region spanning 866–1040 (KDNYPQSVPR…NGHLAVVAPR (175 aa)) is the TH1 domain.

Belongs to the TRAFAC class myosin-kinesin ATPase superfamily. Myosin family. As to quaternary structure, interacts (via its IQ motifs) with CABP1 and CIB1; the interaction with CABP1 and CIB1 is calcium-dependent. Interacts (via tail domain) with PLEKHB1 (via PH domain); the interaction is not affected by the presence or absence of calcium and CALM. Interacts with POLR1A. Interacts with POLR2A. Component of the B-WICH complex, at least composed of SMARCA5/SNF2H, BAZ1B/WSTF, SF3B1, DEK, MYO1C, ERCC6, MYBBP1A and DDX21. Interacts (via its IQ motifs) with CALM; this precludes interaction with YWHAB. Interacts with YWHAB; this precludes interaction with CALM. Interacts with RPS6. Interacts with actin. Interacts with LLPH. Interacts with GLUT4. Interacts (via its IQ motifs) with SH3BGRL3; the interaction is dependent on calcium and takes place at membrane ruffles.

Its subcellular location is the cytoplasm. It is found in the nucleus. The protein resides in the cell cortex. It localises to the cell projection. The protein localises to the stereocilium membrane. Its subcellular location is the cytoplasmic vesicle. It is found in the ruffle membrane. Myosins are actin-based motor molecules with ATPase activity. Unconventional myosins serve in intracellular movements. Their highly divergent tails are presumed to bind to membranous compartments, which would be moved relative to actin filaments. Involved in glucose transporter recycling in response to insulin by regulating movement of intracellular GLUT4-containing vesicles to the plasma membrane. Component of the hair cell's (the sensory cells of the inner ear) adaptation-motor complex. Acts as a mediator of adaptation of mechanoelectrical transduction in stereocilia of vestibular hair cells. Binds phosphoinositides and links the actin cytoskeleton to cellular membranes. This chain is Unconventional myosin-Ic (Myo1c), found in Rattus norvegicus (Rat).